A 329-amino-acid polypeptide reads, in one-letter code: Malate dehydrogenase (329 aa).

Residue 12-18 (GAAGQIG) coordinates NAD(+). Substrate-binding residues include R95 and R101. NAD(+)-binding positions include N108, Q115, and 132–134 (VGN). Residues N134 and R165 each coordinate substrate. H190 serves as the catalytic Proton acceptor.

This sequence belongs to the LDH/MDH superfamily. MDH type 2 family.

It carries out the reaction (S)-malate + NAD(+) = oxaloacetate + NADH + H(+). Catalyzes the reversible oxidation of malate to oxaloacetate. The polypeptide is Malate dehydrogenase (Polynucleobacter asymbioticus (strain DSM 18221 / CIP 109841 / QLW-P1DMWA-1) (Polynucleobacter necessarius subsp. asymbioticus)).